A 359-amino-acid polypeptide reads, in one-letter code: SAGA complex subunit Spt7 (359 aa).

As to quaternary structure, component of the Spt-Ada-Gcn5 acetyltransferase (SAGA) complex consisting of wda/Taf5L, Saf6, Taf9, Taf10b, Taf12, Ada1, Spt3, Spt7, Spt20, Sf3b3, Sf3b5, Nipped-A/Tra1, a histone acetyltransferase (HAT) module made up of Gcn5, Ada2b (Isoform B), Ada3 and Sgf29, and a deubiquitinase (DUB) module made up of not/nonstop, Sgf11 and e(y)2 tethered to SAGA by Atxn7. Interacts with Ada2b; the interaction is direct.

The protein localises to the nucleus. Component of the transcription regulatory complex SAGA, a multiprotein complex that activates transcription by remodeling chromatin and mediating histone acetylation and deubiquitination. The SAGA complex predominantly acetylates histone H3. This Drosophila melanogaster (Fruit fly) protein is SAGA complex subunit Spt7.